The chain runs to 282 residues: Deoxyribonuclease-1 (282 aa).

The first 22 residues, 1–22 (MRGMKLLGALLALAALLQGAVS), serve as a signal peptide directing secretion. The N-linked (GlcNAc...) asparagine glycan is linked to Asn-40. The active site involves Glu-100. Cys-123 and Cys-126 are joined by a disulfide. Asn-128 carries N-linked (GlcNAc...) asparagine glycosylation. His-156 is an active-site residue. Cys-195 and Cys-231 are oxidised to a cystine.

Belongs to the DNase I family. The cofactor is Ca(2+). Mg(2+) is required as a cofactor. As to expression, principally in tissues of the digestive system. Highest levels found in urine, but also relatively abundant in semen and saliva.

It is found in the secreted. It localises to the zymogen granule. Its subcellular location is the nucleus envelope. The catalysed reaction is Endonucleolytic cleavage to 5'-phosphodinucleotide and 5'-phosphooligonucleotide end-products.. In terms of biological role, serum endocuclease secreted into body fluids by a wide variety of exocrine and endocrine organs. Expressed by non-hematopoietic tissues and preferentially cleaves protein-free DNA. Among other functions, seems to be involved in cell death by apoptosis. Binds specifically to G-actin and blocks actin polymerization. Together with DNASE1L3, plays a key role in degrading neutrophil extracellular traps (NETs). NETs are mainly composed of DNA fibers and are released by neutrophils to bind pathogens during inflammation. Degradation of intravascular NETs by DNASE1 and DNASE1L3 is required to prevent formation of clots that obstruct blood vessels and cause organ damage following inflammation. In Homo sapiens (Human), this protein is Deoxyribonuclease-1.